A 357-amino-acid chain; its full sequence is D-alanine--D-alanine ligase (357 aa).

One can recognise an ATP-grasp domain in the interval 134-339 (KQLFEHRGLP…YPDLIAKLID (206 aa)). 167–222 (NDKLTYPVFVKPANLGSSVGISKCNNEEELKSGIAEAFQFDRKLVIEQGINAREIE) contributes to the ATP binding site. Asp-293, Glu-306, and Asn-308 together coordinate Mg(2+).

The protein belongs to the D-alanine--D-alanine ligase family. It depends on Mg(2+) as a cofactor. The cofactor is Mn(2+).

It is found in the cytoplasm. It catalyses the reaction 2 D-alanine + ATP = D-alanyl-D-alanine + ADP + phosphate + H(+). Its pathway is cell wall biogenesis; peptidoglycan biosynthesis. Cell wall formation. The protein is D-alanine--D-alanine ligase of Staphylococcus epidermidis (strain ATCC 35984 / DSM 28319 / BCRC 17069 / CCUG 31568 / BM 3577 / RP62A).